The chain runs to 481 residues: Aspartyl/glutamyl-tRNA(Asn/Gln) amidotransferase subunit B (481 aa).

The protein belongs to the GatB/GatE family. GatB subfamily. As to quaternary structure, heterotrimer of A, B and C subunits.

It carries out the reaction L-glutamyl-tRNA(Gln) + L-glutamine + ATP + H2O = L-glutaminyl-tRNA(Gln) + L-glutamate + ADP + phosphate + H(+). The enzyme catalyses L-aspartyl-tRNA(Asn) + L-glutamine + ATP + H2O = L-asparaginyl-tRNA(Asn) + L-glutamate + ADP + phosphate + 2 H(+). Its function is as follows. Allows the formation of correctly charged Asn-tRNA(Asn) or Gln-tRNA(Gln) through the transamidation of misacylated Asp-tRNA(Asn) or Glu-tRNA(Gln) in organisms which lack either or both of asparaginyl-tRNA or glutaminyl-tRNA synthetases. The reaction takes place in the presence of glutamine and ATP through an activated phospho-Asp-tRNA(Asn) or phospho-Glu-tRNA(Gln). The chain is Aspartyl/glutamyl-tRNA(Asn/Gln) amidotransferase subunit B from Teredinibacter turnerae (strain ATCC 39867 / T7901).